The primary structure comprises 94 residues: Large ribosomal subunit protein bL25 (94 aa).

The protein belongs to the bacterial ribosomal protein bL25 family. In terms of assembly, part of the 50S ribosomal subunit; part of the 5S rRNA/L5/L18/L25 subcomplex. Contacts the 5S rRNA. Binds to the 5S rRNA independently of L5 and L18.

Functionally, this is one of the proteins that binds to the 5S RNA in the ribosome where it forms part of the central protuberance. The protein is Large ribosomal subunit protein bL25 of Edwardsiella ictaluri (strain 93-146).